Reading from the N-terminus, the 250-residue chain is 3-deoxy-manno-octulosonate cytidylyltransferase (250 aa).

It belongs to the KdsB family.

The protein resides in the cytoplasm. The catalysed reaction is 3-deoxy-alpha-D-manno-oct-2-ulosonate + CTP = CMP-3-deoxy-beta-D-manno-octulosonate + diphosphate. Its pathway is nucleotide-sugar biosynthesis; CMP-3-deoxy-D-manno-octulosonate biosynthesis; CMP-3-deoxy-D-manno-octulosonate from 3-deoxy-D-manno-octulosonate and CTP: step 1/1. The protein operates within bacterial outer membrane biogenesis; lipopolysaccharide biosynthesis. Functionally, activates KDO (a required 8-carbon sugar) for incorporation into bacterial lipopolysaccharide in Gram-negative bacteria. In Pectobacterium carotovorum subsp. carotovorum (strain PC1), this protein is 3-deoxy-manno-octulosonate cytidylyltransferase.